Reading from the N-terminus, the 168-residue chain is MAQMAKKVHWSSAAAGAAAAAKISKLEKTTKRFKLIKKRNPSSKLPKRSSHSLLCSLSRSCCCCRCRCCCYCRCCRCCCSRSRRFRSRTTLKFFQITEKGEQSLQRRIRRQLTRSQLELIEPEPTMALEPSEITVAFFSHKNANVSDPEEVPPCLDSDPFPNGDLASS.

The tract at residues Asn-144–Ser-168 is disordered.

As to expression, specifically expressed in spermatozoa (at protein level). Detected from the elongated spermatid stage onwards; not found in immature germ cells or somatic cells (at protein level).

Its subcellular location is the cytoplasm. The protein localises to the cytoskeleton. The protein resides in the perinuclear theca. The protein is Cysteine-rich perinuclear theca protein 1 of Mus musculus (Mouse).